A 327-amino-acid chain; its full sequence is MSFVAHPNIDPRSLGKVGVLLGGRSAEREISLMSGNGVLAALQSRGVDAHGFDPGLQGVAELAAAGFDRVFIALHGRYGEDGTIQGLLEQLGVPYTGSGVLASALAMDKQATKRLWMTHGLATPRFAMLHADTDFDAVVADLGLPLIVKPAREGSSIGLTKVTAADQMRAAFDKAAALDNDVIAETFVDGAELTCPVVGEGDTAEALPVIRIVAPEANYDYQNKYFTDDTQYLCPSGLDAEVERQVQALAVQAYRVLGCRGWARADVMLRADGTPFLLEMNTSPGMTGHSLVPMAARAVGISYEDFVLQVLAAATLDLHPNEHWKPE.

Residues 113 to 312 (KRLWMTHGLA…YEDFVLQVLA (200 aa)) form the ATP-grasp domain. 139–194 (VADLGLPLIVKPAREGSSIGLTKVTAADQMRAAFDKAAALDNDVIAETFVDGAELT) contacts ATP. The Mg(2+) site is built by aspartate 266, glutamate 279, and asparagine 281.

Belongs to the D-alanine--D-alanine ligase family. The cofactor is Mg(2+). Requires Mn(2+) as cofactor.

It is found in the cytoplasm. The enzyme catalyses 2 D-alanine + ATP = D-alanyl-D-alanine + ADP + phosphate + H(+). It participates in cell wall biogenesis; peptidoglycan biosynthesis. Cell wall formation. This Cupriavidus taiwanensis (strain DSM 17343 / BCRC 17206 / CCUG 44338 / CIP 107171 / LMG 19424 / R1) (Ralstonia taiwanensis (strain LMG 19424)) protein is D-alanine--D-alanine ligase.